The following is a 301-amino-acid chain: Cytochrome c biogenesis protein CcsA (301 aa).

The next 8 membrane-spanning stretches (helical) occupy residues N13 to F33, V39 to G59, L73 to Y93, L97 to L117, M146 to I166, T209 to N229, W236 to L256, and A270 to L290.

This sequence belongs to the CcmF/CycK/Ccl1/NrfE/CcsA family. As to quaternary structure, may interact with Ccs1.

It is found in the plastid. The protein localises to the chloroplast thylakoid membrane. Functionally, required during biogenesis of c-type cytochromes (cytochrome c6 and cytochrome f) at the step of heme attachment. The sequence is that of Cytochrome c biogenesis protein CcsA from Guillardia theta (Cryptophyte).